A 199-amino-acid polypeptide reads, in one-letter code: Pyridoxal 5'-phosphate synthase subunit PdxT (199 aa).

49–51 provides a ligand contact to L-glutamine; sequence GES. C81 serves as the catalytic Nucleophile. Residues R110 and 139–140 contribute to the L-glutamine site; that span reads IR. Active-site charge relay system residues include H175 and E177.

Belongs to the glutaminase PdxT/SNO family. In terms of assembly, in the presence of PdxS, forms a dodecamer of heterodimers. Only shows activity in the heterodimer.

The catalysed reaction is aldehydo-D-ribose 5-phosphate + D-glyceraldehyde 3-phosphate + L-glutamine = pyridoxal 5'-phosphate + L-glutamate + phosphate + 3 H2O + H(+). It carries out the reaction L-glutamine + H2O = L-glutamate + NH4(+). The protein operates within cofactor biosynthesis; pyridoxal 5'-phosphate biosynthesis. In terms of biological role, catalyzes the hydrolysis of glutamine to glutamate and ammonia as part of the biosynthesis of pyridoxal 5'-phosphate. The resulting ammonia molecule is channeled to the active site of PdxS. The polypeptide is Pyridoxal 5'-phosphate synthase subunit PdxT (Frankia alni (strain DSM 45986 / CECT 9034 / ACN14a)).